Reading from the N-terminus, the 792-residue chain is Oxidoreductase cns1 (792 aa).

In terms of assembly, interacts with cns2.

It is found in the lipid droplet. Its pathway is secondary metabolite biosynthesis. Functionally, oxidoreductase; part of the gene cluster that mediates the biosynthesis of cordycepin (COR) and pentostatin (PTN), two adenosine analogs with related bioactivity profiles as both mimic adenosine and can inhibit some of the processes that are adenosine dependent. Within the pathway, cns1 catalyzes the last step by converting the cns2 product 2'-carbonyl-3'-deoxyadenosine (2'-C-3'-dA) into cordycepin (3'-deoxyadenosine). The first step of cordycepin biosynthesis involves hydroxyl phosphorylation of the 3'-OH position on adenosine to produce adenosine-3'-monophosphate (3'-AMP), catalyzed by kinase activity of cns3. Next, 3'-AMP is dephosphorylated to 2'-carbonyl-3'-deoxyadenosine by cns2, which is finally converted to cordycepin by the oxidoreductase cns1. Pentostatin production is mediated by the ATP phosphoribosyltransferase activity of cns3 on adenosine to inhibit the activity of adenosine deaminase (ADA) to prevent COR deamination to 3'-deoxyinosine (3'-dI). The chain is Oxidoreductase cns1 from Cordyceps militaris (strain CM01) (Caterpillar fungus).